Consider the following 511-residue polypeptide: Chromosomal replication initiator protein DnaA (511 aa).

Residues 1-90 (MSVELWQQCV…KRSSAPRAAP (90 aa)) are domain I, interacts with DnaA modulators. The tract at residues 91 to 174 (NAPLAAAASQ…QVEGALKHTS (84 aa)) is domain II. The disordered stretch occupies residues 133 to 162 (VAAHDEPSRDSFDPMAGASSQQAPARAEQR). Over residues 135 to 144 (AHDEPSRDSF) the composition is skewed to basic and acidic residues. Residues 175–391 (YLNRTFTFEN…GALKRVIAHS (217 aa)) form a domain III, AAA+ region region. ATP-binding residues include G219, G221, K222, and T223. The interval 392 to 511 (HFMGRDITIE…YKNLLRTLTT (120 aa)) is domain IV, binds dsDNA.

This sequence belongs to the DnaA family. Oligomerizes as a right-handed, spiral filament on DNA at oriC.

It localises to the cytoplasm. In terms of biological role, plays an essential role in the initiation and regulation of chromosomal replication. ATP-DnaA binds to the origin of replication (oriC) to initiate formation of the DNA replication initiation complex once per cell cycle. Binds the DnaA box (a 9 base pair repeat at the origin) and separates the double-stranded (ds)DNA. Forms a right-handed helical filament on oriC DNA; dsDNA binds to the exterior of the filament while single-stranded (ss)DNA is stabiized in the filament's interior. The ATP-DnaA-oriC complex binds and stabilizes one strand of the AT-rich DNA unwinding element (DUE), permitting loading of DNA polymerase. After initiation quickly degrades to an ADP-DnaA complex that is not apt for DNA replication. Binds acidic phospholipids. In Pseudomonas savastanoi pv. phaseolicola (strain 1448A / Race 6) (Pseudomonas syringae pv. phaseolicola (strain 1448A / Race 6)), this protein is Chromosomal replication initiator protein DnaA.